Consider the following 1072-residue polypeptide: Carbamoyl phosphate synthase large chain (1072 aa).

The tract at residues Met-1–Glu-401 is carboxyphosphate synthetic domain. Residues Arg-129, Arg-169, Gly-175, Gly-176, Lys-208, Leu-210, Glu-215, Gly-241, Val-242, His-243, Gln-284, and Glu-298 each coordinate ATP. Positions Lys-133–Ile-327 constitute an ATP-grasp 1 domain. The Mg(2+) site is built by Gln-284, Glu-298, and Asn-300. Residues Gln-284, Glu-298, and Asn-300 each coordinate Mn(2+). An oligomerization domain region spans residues Ile-402–Asp-544. The carbamoyl phosphate synthetic domain stretch occupies residues Glu-545–Gly-929. The region spanning Ser-671–Leu-861 is the ATP-grasp 2 domain. ATP is bound by residues Arg-707, Lys-746, Ile-748, Glu-752, Gly-777, Val-778, His-779, Ser-780, Gln-820, and Glu-832. Mg(2+)-binding residues include Gln-820, Glu-832, and Asn-834. Residues Gln-820, Glu-832, and Asn-834 each contribute to the Mn(2+) site. The region spanning Leu-930–Leu-1072 is the MGS-like domain. Positions Leu-930–Leu-1072 are allosteric domain.

Belongs to the CarB family. As to quaternary structure, composed of two chains; the small (or glutamine) chain promotes the hydrolysis of glutamine to ammonia, which is used by the large (or ammonia) chain to synthesize carbamoyl phosphate. Tetramer of heterodimers (alpha,beta)4. The cofactor is Mg(2+). It depends on Mn(2+) as a cofactor.

It carries out the reaction hydrogencarbonate + L-glutamine + 2 ATP + H2O = carbamoyl phosphate + L-glutamate + 2 ADP + phosphate + 2 H(+). The enzyme catalyses hydrogencarbonate + NH4(+) + 2 ATP = carbamoyl phosphate + 2 ADP + phosphate + 2 H(+). The protein operates within amino-acid biosynthesis; L-arginine biosynthesis; carbamoyl phosphate from bicarbonate: step 1/1. It participates in pyrimidine metabolism; UMP biosynthesis via de novo pathway; (S)-dihydroorotate from bicarbonate: step 1/3. Its function is as follows. Large subunit of the glutamine-dependent carbamoyl phosphate synthetase (CPSase). CPSase catalyzes the formation of carbamoyl phosphate from the ammonia moiety of glutamine, carbonate, and phosphate donated by ATP, constituting the first step of 2 biosynthetic pathways, one leading to arginine and/or urea and the other to pyrimidine nucleotides. The large subunit (synthetase) binds the substrates ammonia (free or transferred from glutamine from the small subunit), hydrogencarbonate and ATP and carries out an ATP-coupled ligase reaction, activating hydrogencarbonate by forming carboxy phosphate which reacts with ammonia to form carbamoyl phosphate. In Thermoanaerobacter sp. (strain X514), this protein is Carbamoyl phosphate synthase large chain.